A 425-amino-acid chain; its full sequence is 5-nitroanthranilic acid aminohydrolase (425 aa).

The active site involves Asp88. The Proton acceptor role is filled by Glu158.

The protein belongs to the peptidase M20A family. Co(2+) is required as a cofactor. Requires Mn(2+) as cofactor. The cofactor is Zn(2+). Fe(2+) serves as cofactor. It depends on Ni(2+) as a cofactor.

The enzyme catalyses 5-nitroanthranilate + H2O + H(+) = 5-nitrosalicylate + NH4(+). Its function is as follows. Catalyzes the deamination of 5-nitroanthranilate (5NAA) to 5-nitrosalicylate (5NSA), the first step in biodegradation of 5-nitroanthranilate. In Bradyrhizobium sp, this protein is 5-nitroanthranilic acid aminohydrolase (naaA).